The chain runs to 190 residues: Hypoxanthine/guanine phosphoribosyltransferase (190 aa).

Belongs to the purine/pyrimidine phosphoribosyltransferase family. Archaeal HPRT subfamily. As to quaternary structure, homodimer.

It localises to the cytoplasm. The catalysed reaction is IMP + diphosphate = hypoxanthine + 5-phospho-alpha-D-ribose 1-diphosphate. It carries out the reaction GMP + diphosphate = guanine + 5-phospho-alpha-D-ribose 1-diphosphate. It participates in purine metabolism; IMP biosynthesis via salvage pathway; IMP from hypoxanthine: step 1/1. In terms of biological role, catalyzes a salvage reaction resulting in the formation of IMP that is energically less costly than de novo synthesis. The protein is Hypoxanthine/guanine phosphoribosyltransferase of Methanohalophilus mahii (strain ATCC 35705 / DSM 5219 / SLP).